A 133-amino-acid polypeptide reads, in one-letter code: Putative N-acetylgalactosamine permease IIC component 2 (133 aa).

The Cytoplasmic segment spans residues 1-2; the sequence is ME. Residues 1 to 133 enclose the PTS EIIC type-4 domain; the sequence is MEISLLQAFA…CDLATNPRRI (133 aa). The helical transmembrane segment at 3–23 threads the bilayer; it reads ISLLQAFALGIIAFIAGLDMF. Residues 24 to 32 lie on the Periplasmic side of the membrane; that stretch reads NGLTHMHRP. The chain crosses the membrane as a helical span at residues 33–53; the sequence is VVLGPLVGLVLGDLHTGILTG. Topologically, residues 54-65 are cytoplasmic; that stretch reads GTLELVWMGLAP. The helical transmembrane segment at 66-86 threads the bilayer; it reads LAGAQPPNVIIGTIVGTAFAI. Topologically, residues 87–93 are periplasmic; sequence TTGVKPD. A helical membrane pass occupies residues 94–114; the sequence is VAVGVAVPFAVAVQMGITFLF. The Cytoplasmic segment spans residues 115 to 133; sequence SVMSGVMSRCDLATNPRRI.

It is found in the cell inner membrane. Functionally, the phosphoenolpyruvate-dependent sugar phosphotransferase system (PTS), a major carbohydrate active -transport system, catalyzes the phosphorylation of incoming sugar substrates concomitant with their translocation across the cell membrane. This system is involved in N-acetylgalactosamine transport. The protein is Putative N-acetylgalactosamine permease IIC component 2 (agaW) of Escherichia coli (strain K12).